Consider the following 195-residue polypeptide: 7-methyl-GTP pyrophosphatase (195 aa).

The Proton acceptor role is filled by aspartate 70.

This sequence belongs to the Maf family. YceF subfamily. A divalent metal cation is required as a cofactor.

The protein localises to the cytoplasm. It carries out the reaction N(7)-methyl-GTP + H2O = N(7)-methyl-GMP + diphosphate + H(+). Its function is as follows. Nucleoside triphosphate pyrophosphatase that hydrolyzes 7-methyl-GTP (m(7)GTP). May have a dual role in cell division arrest and in preventing the incorporation of modified nucleotides into cellular nucleic acids. This is 7-methyl-GTP pyrophosphatase from Shewanella sp. (strain MR-4).